Here is a 356-residue protein sequence, read N- to C-terminus: 3-isopropylmalate dehydrogenase (356 aa).

Positions 90, 100, 128, and 222 each coordinate substrate. Mg(2+)-binding residues include Asp-222, Asp-246, and Asp-250. 280–292 contributes to the NAD(+) binding site; sequence GSAPDIAGKGVAN.

It belongs to the isocitrate and isopropylmalate dehydrogenases family. LeuB type 1 subfamily. Homodimer. Mg(2+) serves as cofactor. Requires Mn(2+) as cofactor.

Its subcellular location is the cytoplasm. It catalyses the reaction (2R,3S)-3-isopropylmalate + NAD(+) = 4-methyl-2-oxopentanoate + CO2 + NADH. The protein operates within amino-acid biosynthesis; L-leucine biosynthesis; L-leucine from 3-methyl-2-oxobutanoate: step 3/4. Catalyzes the oxidation of 3-carboxy-2-hydroxy-4-methylpentanoate (3-isopropylmalate) to 3-carboxy-4-methyl-2-oxopentanoate. The product decarboxylates to 4-methyl-2 oxopentanoate. The protein is 3-isopropylmalate dehydrogenase of Albidiferax ferrireducens (strain ATCC BAA-621 / DSM 15236 / T118) (Rhodoferax ferrireducens).